Consider the following 328-residue polypeptide: MAKPAKRVAVTGAAGQIAYSLLFRIANGDLLGKDQPVILQLLDLPQAQGAVKGVVMELDDCAFPLLSGVVITDDPKVAFKDADVALLVGARPRSKGMERKDLLSANAEIFTVQGAALNEVASRDVKVLVVGNPANTNAYIAMKSAPDLPKKNFTAMLRLDHNRALSQLAAKSGKPVASIEKLAVWGNHSPTMYPDFRFATAEGESLLKLINDDVWNRDTFIPTVGKRGAAIIEARGLSSAASAANAAIDHVRDWVLGTNGKWVTMGIPSDGSYGIPEDIIYGVPVVCENGEYKRIEGLEIDAFSREKMDGTLAELLEERDGVAHLLKN.

12–18 (GAAGQIA) provides a ligand contact to NAD(+). Residues Arg93 and Arg99 each coordinate substrate. NAD(+) is bound by residues Asn106, Gln113, and 130–132 (VGN). Substrate contacts are provided by Asn132 and Arg163. His188 serves as the catalytic Proton acceptor.

Belongs to the LDH/MDH superfamily. MDH type 2 family.

The catalysed reaction is (S)-malate + NAD(+) = oxaloacetate + NADH + H(+). Catalyzes the reversible oxidation of malate to oxaloacetate. The chain is Malate dehydrogenase from Burkholderia lata (strain ATCC 17760 / DSM 23089 / LMG 22485 / NCIMB 9086 / R18194 / 383).